Consider the following 1003-residue polypeptide: Translation initiation factor IF-2 (1003 aa).

Residues 36–392 (SSTIEPPVVK…RQKRNEYESM (357 aa)) are disordered. Residues 62–151 (AAKPAAAKPA…PKPAAAAKPA (90 aa)) are compositionally biased toward low complexity. Pro residues-rich tracts occupy residues 178 to 190 (DGMP…PAPK) and 213 to 230 (PRPG…PGGG). Gly residues-rich tracts occupy residues 231 to 243 (PRPQ…GGQR) and 255 to 271 (GNRG…GPRP). Over residues 273–286 (GGPRPQGGSRPQGG) the composition is skewed to low complexity. The segment covering 329–372 (GKGGRGGQAGGGAGGGFNRGGGTGGGAGRGGRRGGTAGAFGRPG) has biased composition (gly residues). The span at 376-385 (RRGRKSKRQK) shows a compositional bias: basic residues. The region spanning 498-670 (KRPPVVTVMG…VCLTADAELD (173 aa)) is the tr-type G domain. The interval 507–514 (GHVDHGKT) is G1. GTP is bound at residue 507 to 514 (GHVDHGKT). Residues 532-536 (GITQG) form a G2 region. The segment at 557-560 (DTPG) is G3. GTP contacts are provided by residues 557–561 (DTPGH) and 611–614 (NKID). Residues 611–614 (NKID) form a G4 region. Residues 647-649 (SAK) form a G5 region.

It belongs to the TRAFAC class translation factor GTPase superfamily. Classic translation factor GTPase family. IF-2 subfamily.

The protein localises to the cytoplasm. Its function is as follows. One of the essential components for the initiation of protein synthesis. Protects formylmethionyl-tRNA from spontaneous hydrolysis and promotes its binding to the 30S ribosomal subunits. Also involved in the hydrolysis of GTP during the formation of the 70S ribosomal complex. The protein is Translation initiation factor IF-2 of Corynebacterium glutamicum (strain R).